A 255-amino-acid polypeptide reads, in one-letter code: tRNA (guanine-N(7)-)-methyltransferase (255 aa).

Residues Glu64, Glu89, Asp116, and Asp138 each contribute to the S-adenosyl-L-methionine site. The active site involves Asp138. Substrate is bound by residues Lys142, Asp174, and 212-215 (TRYE).

Belongs to the class I-like SAM-binding methyltransferase superfamily. TrmB family.

It catalyses the reaction guanosine(46) in tRNA + S-adenosyl-L-methionine = N(7)-methylguanosine(46) in tRNA + S-adenosyl-L-homocysteine. It functions in the pathway tRNA modification; N(7)-methylguanine-tRNA biosynthesis. Catalyzes the formation of N(7)-methylguanine at position 46 (m7G46) in tRNA. In Rhodospirillum rubrum (strain ATCC 11170 / ATH 1.1.1 / DSM 467 / LMG 4362 / NCIMB 8255 / S1), this protein is tRNA (guanine-N(7)-)-methyltransferase.